The following is a 526-amino-acid chain: Cytochrome P450 monooxygenase 253 (526 aa).

The next 3 helical transmembrane spans lie at 13–33, 115–135, and 306–326; these read IASSTIGQRILLALALGLLLI, FIMAGEILTGGMLIVFTGYGK, and IGAGAETTAASLSVFMLAMTL. C451 lines the heme pocket.

Belongs to the cytochrome P450 family. It depends on heme as a cofactor.

Its subcellular location is the membrane. It participates in secondary metabolite biosynthesis. Its function is as follows. Cytochrome P450 monooxygenase that is able to use delta(6)-protoilludene as a substrate to produce delta(6)-protoilludene-8-ol. This Postia placenta (strain ATCC 44394 / Madison 698-R) (Brown rot fungus) protein is Cytochrome P450 monooxygenase 253.